We begin with the raw amino-acid sequence, 113 residues long: Dolichyl-diphosphooligosaccharide--protein glycosyltransferase subunit DAD1 (113 aa).

Over 1–30 the chain is Cytoplasmic; the sequence is MGSSAFEVLTFFLKDYKANTPQKLKIIDAY. Residues 31-51 traverse the membrane as a helical segment; sequence LLYILLTGINQFLYCCLVGTF. Residue P52 is a topological domain, lumenal. The helical transmembrane segment at 53–73 threads the bilayer; it reads FNSFLSGFISCVASFVLGVCL. At 74–92 the chain is on the cytoplasmic side; the sequence is RLQVNPQNSSNFCGIPPER. The helical transmembrane segment at 93-113 threads the bilayer; it reads AFADFIFAHVVLHLVVMNFIG.

The protein belongs to the DAD/OST2 family. In terms of assembly, component of the oligosaccharyltransferase (OST) complex. As to expression, widely expressed. Greatest expression seen in the epidermis, intermediate expression in the fat body and midgut and mild expression observed in the silk gland.

It is found in the endoplasmic reticulum membrane. It functions in the pathway protein modification; protein glycosylation. Functionally, subunit of the oligosaccharyl transferase (OST) complex that catalyzes the initial transfer of a defined glycan (Glc(3)Man(9)GlcNAc(2) in eukaryotes) from the lipid carrier dolichol-pyrophosphate to an asparagine residue within an Asn-X-Ser/Thr consensus motif in nascent polypeptide chains, the first step in protein N-glycosylation. N-glycosylation occurs cotranslationally and the complex associates with the Sec61 complex at the channel-forming translocon complex that mediates protein translocation across the endoplasmic reticulum (ER). All subunits are required for a maximal enzyme activity. This Araneus ventricosus (Orbweaver spider) protein is Dolichyl-diphosphooligosaccharide--protein glycosyltransferase subunit DAD1.